The following is a 154-amino-acid chain: MSKTDVSGLSQLGRQVDAPTSPETAVLERVPNTNAGTDYVVRFTAPEFTSLCPMTGQPDFAHIVIDYIPGDFLVESKSLKLFMTSFRNHGSFHEDCSIYIAKRLVDLLDPKWLRIGAYWYPRGGIPIDVFWQTGEVPKGVWLPDQGVPTYRGRG.

Residues 1 to 13 (MSKTDVSGLSQLG) are compositionally biased toward polar residues. The interval 1–24 (MSKTDVSGLSQLGRQVDAPTSPET) is disordered. Cys52 serves as the catalytic Thioimide intermediate. Asp59 serves as the catalytic Proton donor. Residues 74 to 76 (VES) and 93 to 94 (HE) each bind substrate.

Belongs to the GTP cyclohydrolase I family. QueF type 1 subfamily.

It localises to the cytoplasm. It carries out the reaction 7-aminomethyl-7-carbaguanine + 2 NADP(+) = 7-cyano-7-deazaguanine + 2 NADPH + 3 H(+). The protein operates within tRNA modification; tRNA-queuosine biosynthesis. In terms of biological role, catalyzes the NADPH-dependent reduction of 7-cyano-7-deazaguanine (preQ0) to 7-aminomethyl-7-deazaguanine (preQ1). The sequence is that of NADPH-dependent 7-cyano-7-deazaguanine reductase from Allorhizobium ampelinum (strain ATCC BAA-846 / DSM 112012 / S4) (Agrobacterium vitis (strain S4)).